We begin with the raw amino-acid sequence, 149 residues long: Calmodulin-1 (149 aa).

N-acetylalanine is present on A2. EF-hand domains are found at residues 8 to 43 (EQIA…LGQN), 44 to 79 (PTEA…KMKD), 81 to 116 (DSEE…LGEK), and 117 to 149 (LTDE…MTSK). Ca(2+) is bound by residues D21, D23, D25, T27, E32, D57, D59, N61, T63, E68, D94, D96, N98, and E105. At K116 the chain carries N6,N6,N6-trimethyllysine. Residues D130, D132, D134, Q136, and E141 each coordinate Ca(2+).

The protein belongs to the calmodulin family.

Functionally, calmodulin mediates the control of a large number of enzymes, ion channels and other proteins by Ca(2+). Among the enzymes to be stimulated by the calmodulin-Ca(2+) complex are a number of protein kinases and phosphatases. The sequence is that of Calmodulin-1 from Branchiostoma floridae (Florida lancelet).